The primary structure comprises 414 residues: Protein phosphatase 2C homolog 3 (414 aa).

Residues 23–288 form the PPM-type phosphatase domain; that stretch reads LYGLSSMQGW…DNMTVCIVAL (266 aa). D62, G63, D230, and D279 together coordinate Mn(2+). Disordered regions lie at residues 313-368 and 380-414; these read APPE…TNGS and FPHK…SAAD. Basic and acidic residues predominate over residues 350–363; sequence GYDKDANENSKEDD. A compositionally biased stretch (polar residues) spans 390–400; it reads SSETDIVNSNK. Residues 401–414 show a composition bias toward basic and acidic residues; the sequence is DVADDHKEAVSAAD.

Belongs to the PP2C family. As to quaternary structure, monomer. Mg(2+) is required as a cofactor. It depends on Mn(2+) as a cofactor.

It is found in the cytoplasm. The protein localises to the nucleus. The enzyme catalyses O-phospho-L-seryl-[protein] + H2O = L-seryl-[protein] + phosphate. It carries out the reaction O-phospho-L-threonyl-[protein] + H2O = L-threonyl-[protein] + phosphate. Dephosphorylating regulator for many key proteins. Has an important role in osmotic stability and cell shape control. It may negatively regulate the osmosensing signal transmitted through wis1 map kinase. This Schizosaccharomyces pombe (strain 972 / ATCC 24843) (Fission yeast) protein is Protein phosphatase 2C homolog 3 (ptc3).